The primary structure comprises 388 residues: Diacylglycerol O-acyltransferase 2 (388 aa).

The Cytoplasmic portion of the chain corresponds to 1-69 (MKTLIAAYSG…NRSKVEKQLQ (69 aa)). Residues 70–88 (VISVLQWVLSFLVLGVACS) form a helical membrane-spanning segment. Residues 89 to 92 (VILM) lie on the Lumenal side of the membrane. A helical membrane pass occupies residues 93-112 (YTFCTDCWLIAVLYFTWLAF). The Cytoplasmic segment spans residues 113–388 (DWNTPKKGGR…LPETEVLEVN (276 aa)).

It belongs to the diacylglycerol acyltransferase family. Forms multimeric complexes consisting of several DGAT2 subunits. Interacts with SLC27A1 and this interaction is enhanced in the presence of ZFYVE1. As to expression, predominantly expressed in liver. Also expressed in testis.

The protein resides in the endoplasmic reticulum membrane. Its subcellular location is the lipid droplet. It localises to the cytoplasm. It is found in the perinuclear region. It carries out the reaction an acyl-CoA + a 1,2-diacyl-sn-glycerol = a triacyl-sn-glycerol + CoA. It catalyses the reaction all-trans-retinol + an acyl-CoA = an all-trans-retinyl ester + CoA. The enzyme catalyses 1,2-di-(9Z-octadecenoyl)-sn-glycerol + hexadecanoyl-CoA = 1,2-di-(9Z)-octadecenoyl-3-hexadecanoyl-sn-glycerol + CoA. The catalysed reaction is 1,2-di-(9Z-octadecenoyl)-sn-glycerol + (9Z)-octadecenoyl-CoA = 1,2,3-tri-(9Z-octadecenoyl)-glycerol + CoA. It carries out the reaction 1,3-di-(9Z-octadecenoyl)-glycerol + (9Z)-octadecenoyl-CoA = 1,2,3-tri-(9Z-octadecenoyl)-glycerol + CoA. It catalyses the reaction 2,3-di-(9Z)-octadecenoyl-sn-glycerol + (9Z)-octadecenoyl-CoA = 1,2,3-tri-(9Z-octadecenoyl)-glycerol + CoA. The enzyme catalyses 2-(9Z-octadecenoyl)-glycerol + hexadecanoyl-CoA = 1-hexadecanoyl-2-(9Z-octadecenoyl)-sn-glycerol + CoA. The catalysed reaction is 2-(9Z-octadecenoyl)-glycerol + (9Z)-octadecenoyl-CoA = 1,2-di-(9Z-octadecenoyl)-sn-glycerol + CoA. It carries out the reaction all-trans-retinol + hexadecanoyl-CoA = all-trans-retinyl hexadecanoate + CoA. It catalyses the reaction 1-O-(9Z-octadecenyl)-glycerol + (9Z)-octadecenoyl-CoA = 1-O-(9Z-octadecyl)-3-(9Z-octadecenoyl)-glycerol + CoA. The enzyme catalyses 1-(9Z-octadecenoyl)-glycerol + (9Z)-octadecenoyl-CoA = 1,2-di-(9Z-octadecenoyl)-glycerol + CoA. The protein operates within glycerolipid metabolism; triacylglycerol biosynthesis. With respect to regulation, inhibited by niacin. Functionally, essential acyltransferase that catalyzes the terminal and only committed step in triacylglycerol synthesis by using diacylglycerol and fatty acyl CoA as substrates. Required for synthesis and storage of intracellular triglycerides. Probably plays a central role in cytosolic lipid accumulation. In liver, is primarily responsible for incorporating endogenously synthesized fatty acids into triglycerides. Also functions as an acyl-CoA retinol acyltransferase (ARAT). Also able to use 1-monoalkylglycerol (1-MAkG) as an acyl acceptor for the synthesis of monoalkyl-monoacylglycerol (MAMAG). This is Diacylglycerol O-acyltransferase 2 from Mus musculus (Mouse).